We begin with the raw amino-acid sequence, 1228 residues long: DNA-directed RNA polymerase subunit beta'' (1228 aa).

Cysteine 222, cysteine 296, cysteine 303, and cysteine 306 together coordinate Zn(2+).

This sequence belongs to the RNA polymerase beta' chain family. RpoC2 subfamily. In terms of assembly, in plastids the minimal PEP RNA polymerase catalytic core is composed of four subunits: alpha, beta, beta', and beta''. When a (nuclear-encoded) sigma factor is associated with the core the holoenzyme is formed, which can initiate transcription. Requires Zn(2+) as cofactor.

The protein resides in the plastid. It localises to the chloroplast. The enzyme catalyses RNA(n) + a ribonucleoside 5'-triphosphate = RNA(n+1) + diphosphate. DNA-dependent RNA polymerase catalyzes the transcription of DNA into RNA using the four ribonucleoside triphosphates as substrates. The chain is DNA-directed RNA polymerase subunit beta'' from Gracilaria tenuistipitata var. liui (Red alga).